The primary structure comprises 621 residues: Chaperone protein HtpG (621 aa).

The interval methionine 1–arginine 341 is a; substrate-binding. The tract at residues glutamate 342 to asparagine 547 is b. The tract at residues phenylalanine 548–leucine 621 is c.

This sequence belongs to the heat shock protein 90 family. As to quaternary structure, homodimer.

Its subcellular location is the cytoplasm. In terms of biological role, molecular chaperone. Has ATPase activity. The protein is Chaperone protein HtpG of Helicobacter pylori (strain HPAG1).